The sequence spans 428 residues: Serine--tRNA ligase (428 aa).

235–237 (TAE) lines the L-serine pocket. 266–268 (RSE) is a binding site for ATP. E289 is a binding site for L-serine. ATP is bound at residue 353–356 (EISS). S389 is a binding site for L-serine.

This sequence belongs to the class-II aminoacyl-tRNA synthetase family. Type-1 seryl-tRNA synthetase subfamily. In terms of assembly, homodimer. The tRNA molecule binds across the dimer.

The protein resides in the cytoplasm. It catalyses the reaction tRNA(Ser) + L-serine + ATP = L-seryl-tRNA(Ser) + AMP + diphosphate + H(+). It carries out the reaction tRNA(Sec) + L-serine + ATP = L-seryl-tRNA(Sec) + AMP + diphosphate + H(+). The protein operates within aminoacyl-tRNA biosynthesis; selenocysteinyl-tRNA(Sec) biosynthesis; L-seryl-tRNA(Sec) from L-serine and tRNA(Sec): step 1/1. In terms of biological role, catalyzes the attachment of serine to tRNA(Ser). Is also able to aminoacylate tRNA(Sec) with serine, to form the misacylated tRNA L-seryl-tRNA(Sec), which will be further converted into selenocysteinyl-tRNA(Sec). This chain is Serine--tRNA ligase, found in Shewanella frigidimarina (strain NCIMB 400).